A 174-amino-acid chain; its full sequence is MGILNLWRQFGRRYFWSHLLLGVVAASIGAPTILAGVTDNISQANTSPSQSWQNQALSAFDNLFSLQNVQHQPANGVNYWQQHAVRNVIRQLSFAFSISQPMSDETAKQSIRLSSSNIQQLVLETLNTLLIREPKPPEPVLDIPFLNVASQSSYILTLWIAKAQGIRAGPTAYL.

Positions 1 to 35 are cleaved as a signal peptide; sequence MGILNLWRQFGRRYFWSHLLLGVVAASIGAPTILA.

The protein belongs to the SecM family.

The protein localises to the cytoplasm. The protein resides in the cytosol. Its subcellular location is the periplasm. Its function is as follows. Regulates secA expression by translational coupling of the secM secA operon. Translational pausing at a specific Pro residue 5 residues before the end of the protein may allow disruption of a mRNA repressor helix that normally suppresses secA translation initiation. The sequence is that of Secretion monitor from Photorhabdus laumondii subsp. laumondii (strain DSM 15139 / CIP 105565 / TT01) (Photorhabdus luminescens subsp. laumondii).